We begin with the raw amino-acid sequence, 273 residues long: Putative pyruvate, phosphate dikinase regulatory protein (273 aa).

149–156 is an ADP binding site; the sequence is GPSRTSKT.

This sequence belongs to the pyruvate, phosphate/water dikinase regulatory protein family. PDRP subfamily.

The enzyme catalyses N(tele)-phospho-L-histidyl/L-threonyl-[pyruvate, phosphate dikinase] + ADP = N(tele)-phospho-L-histidyl/O-phospho-L-threonyl-[pyruvate, phosphate dikinase] + AMP + H(+). The catalysed reaction is N(tele)-phospho-L-histidyl/O-phospho-L-threonyl-[pyruvate, phosphate dikinase] + phosphate + H(+) = N(tele)-phospho-L-histidyl/L-threonyl-[pyruvate, phosphate dikinase] + diphosphate. Its function is as follows. Bifunctional serine/threonine kinase and phosphorylase involved in the regulation of the pyruvate, phosphate dikinase (PPDK) by catalyzing its phosphorylation/dephosphorylation. This Rickettsia canadensis (strain McKiel) protein is Putative pyruvate, phosphate dikinase regulatory protein.